The primary structure comprises 1160 residues: Pesticidal crystal protein Cry1Db (1160 aa).

Belongs to the delta endotoxin family.

Promotes colloidosmotic lysis by binding to the midgut epithelial cells of insects. This Bacillus thuringiensis protein is Pesticidal crystal protein Cry1Db (cry1Db).